A 75-amino-acid polypeptide reads, in one-letter code: MQVKKIKKRKKVNFFQKNNIKYIDYKDIELLKKFISPNGQILPRRITGTSPKDQRQLALAIKRARQMALLPYVIE.

It belongs to the bacterial ribosomal protein bS18 family. In terms of assembly, part of the 30S ribosomal subunit. Forms a tight heterodimer with protein bS6.

Functionally, binds as a heterodimer with protein bS6 to the central domain of the 16S rRNA, where it helps stabilize the platform of the 30S subunit. This is Small ribosomal subunit protein bS18 from Mycoplasma mycoides subsp. mycoides SC (strain CCUG 32753 / NCTC 10114 / PG1).